We begin with the raw amino-acid sequence, 279 residues long: Bifunctional protein FolD (279 aa).

Residues 165–167 (GRS), S190, and I231 each bind NADP(+).

The protein belongs to the tetrahydrofolate dehydrogenase/cyclohydrolase family. Homodimer.

It carries out the reaction (6R)-5,10-methylene-5,6,7,8-tetrahydrofolate + NADP(+) = (6R)-5,10-methenyltetrahydrofolate + NADPH. It catalyses the reaction (6R)-5,10-methenyltetrahydrofolate + H2O = (6R)-10-formyltetrahydrofolate + H(+). Its pathway is one-carbon metabolism; tetrahydrofolate interconversion. Its function is as follows. Catalyzes the oxidation of 5,10-methylenetetrahydrofolate to 5,10-methenyltetrahydrofolate and then the hydrolysis of 5,10-methenyltetrahydrofolate to 10-formyltetrahydrofolate. This Halalkalibacterium halodurans (strain ATCC BAA-125 / DSM 18197 / FERM 7344 / JCM 9153 / C-125) (Bacillus halodurans) protein is Bifunctional protein FolD.